The sequence spans 240 residues: E3 ubiquitin-protein ligase LubX (240 aa).

2 U-box domains span residues 30–103 and 125–198; these read TTPT…QTNY and EIPD…RKRE.

In terms of processing, ubiquitinated in the presence of host E1 ubiquitin-activating enzyme, E2 ubiquitin-conjugating enzyme and ubiquitin.

The protein resides in the secreted. It is found in the host cell. It carries out the reaction S-ubiquitinyl-[E2 ubiquitin-conjugating enzyme]-L-cysteine + [acceptor protein]-L-lysine = [E2 ubiquitin-conjugating enzyme]-L-cysteine + N(6)-ubiquitinyl-[acceptor protein]-L-lysine.. Its function is as follows. Effector proteins function to alter host cell physiology and promote bacterial survival in host tissues. This protein is an E3 ubiquitin ligase that interferes with host's ubiquitination pathway. This Legionella pneumophila (strain Paris) protein is E3 ubiquitin-protein ligase LubX (lubX).